The sequence spans 418 residues: Sialidase-3 (418 aa).

Residues 24 to 27 carry the FRIP motif motif; it reads YRIP. The substrate site is built by arginine 25 and arginine 45. Aspartate 50 serves as the catalytic Proton acceptor. The stretch at 129-140 is one BNR 1 repeat; the sequence is LYSEDSGCSWGE. Substrate is bound by residues tyrosine 179 and tyrosine 181. The BNR 2 repeat unit spans residues 201–212; it reads FYSDDLGVTWHC. The substrate site is built by glutamate 223 and arginine 243. One copy of the BNR 3 repeat lies at 252–263; the sequence is AFSTDSGDCFQK. Arginine 339 contacts substrate. The active-site Nucleophile is tyrosine 369. Glutamate 386 is a catalytic residue.

Belongs to the glycosyl hydrolase 33 family. In terms of assembly, interacts with CAV1; this interaction enhances NEU3 sialidase activity within caveola. Interacts with EGFR; this interaction mediates desialylation of EGFR enhancing downstream signaling. Post-translationally, palmitoylated; may regulate intracellular trafficking and anchorage to plasma membrane and endomembranes. In terms of tissue distribution, expressed in brain, cardiac muscle and weakly in liver.

It localises to the cell membrane. The protein resides in the membrane. The protein localises to the caveola. Its subcellular location is the early endosome membrane. It is found in the recycling endosome membrane. It localises to the lysosome membrane. The enzyme catalyses Hydrolysis of alpha-(2-&gt;3)-, alpha-(2-&gt;6)-, alpha-(2-&gt;8)- glycosidic linkages of terminal sialic acid residues in oligosaccharides, glycoproteins, glycolipids, colominic acid and synthetic substrates.. It carries out the reaction a ganglioside GD1a + H2O = a ganglioside GM1 + N-acetylneuraminate. The catalysed reaction is a ganglioside GD1a (d18:1(4E)) + H2O = a ganglioside GM1 (d18:1(4E)) + N-acetylneuraminate. It catalyses the reaction a ganglioside GD1b + H2O = a ganglioside GM1 + N-acetylneuraminate. The enzyme catalyses a ganglioside GD1b (d18:1(4E)) + H2O = a ganglioside GM1 (d18:1(4E)) + N-acetylneuraminate. It carries out the reaction a ganglioside GD3 + H2O = a ganglioside GM3 + N-acetylneuraminate. The catalysed reaction is a ganglioside GD3 (d18:1(4E)) + H2O = a ganglioside GM3 (d18:1(4E)) + N-acetylneuraminate. It catalyses the reaction a ganglioside GM3 + H2O = a beta-D-galactosyl-(1-&gt;4)-beta-D-glucosyl-(1&lt;-&gt;1)-ceramide + N-acetylneuraminate. The enzyme catalyses a ganglioside GM1 + H2O = a ganglioside GA1 + N-acetylneuraminate. It carries out the reaction a ganglioside GM1 (d18:1(4E)) + H2O = a ganglioside GA1 (d18:1(4E)) + N-acetylneuraminate. The catalysed reaction is a ganglioside GM2 (d18:1(4E)) + H2O = a ganglioside GA2 (d18:1(4E)) + N-acetylneuraminate. It catalyses the reaction a ganglioside GM3 (d18:1(4E)) + H2O = a beta-D-Gal-(1-&gt;4)-beta-D-Glc-(1&lt;-&gt;1)-Cer(d18:1(4E)) + N-acetylneuraminate. The enzyme catalyses a ganglioside GT1b + H2O = a ganglioside GD1b + N-acetylneuraminate. Exo-alpha-sialidase that catalyzes the hydrolytic cleavage of the terminal sialic acid (N-acetylneuraminic acid, Neu5Ac) of a glycan moiety in the catabolism of glycolipids, glycoproteins and oligosacharides. Displays high catalytic efficiency for gangliosides including alpha-(2-&gt;3)-sialylated GD1a and GM3 and alpha-(2-&gt;8)-sialylated GD3. Plays a role in the regulation of transmembrane signaling through the modulation of ganglioside content of the lipid bilayer and by direct interaction with signaling receptors, such as EGFR. Desialylates EGFR and activates downstream signaling in proliferating cells. Contributes to clathrin-mediated endocytosis by regulating sorting of endocytosed receptors to early and recycling endosomes. This is Sialidase-3 (Neu3) from Rattus norvegicus (Rat).